A 101-amino-acid polypeptide reads, in one-letter code: Small ribosomal subunit protein uS14 (101 aa).

A disordered region spans residues 1–20 (MAKTSAVEKNKRRRKLVANH). Basic residues predominate over residues 10-20 (NKRRRKLVANH).

The protein belongs to the universal ribosomal protein uS14 family. Part of the 30S ribosomal subunit. Contacts proteins S3 and S10.

In terms of biological role, binds 16S rRNA, required for the assembly of 30S particles and may also be responsible for determining the conformation of the 16S rRNA at the A site. This Sinorhizobium medicae (strain WSM419) (Ensifer medicae) protein is Small ribosomal subunit protein uS14.